The sequence spans 329 residues: GMP reductase (329 aa).

C178 (thioimidate intermediate) is an active-site residue. I207 to C230 is an NADP(+) binding site.

Belongs to the IMPDH/GMPR family. GuaC type 2 subfamily.

It catalyses the reaction IMP + NH4(+) + NADP(+) = GMP + NADPH + 2 H(+). Catalyzes the irreversible NADPH-dependent deamination of GMP to IMP. It functions in the conversion of nucleobase, nucleoside and nucleotide derivatives of G to A nucleotides, and in maintaining the intracellular balance of A and G nucleotides. This Lacticaseibacillus casei (strain BL23) (Lactobacillus casei) protein is GMP reductase.